A 668-amino-acid chain; its full sequence is Acetoin catabolism regulatory protein (668 aa).

Positions 341–570 (LTGGDAALQL…NVLEYARAVC (230 aa)) constitute a Sigma-54 factor interaction domain. ATP-binding positions include 369-376 (GETGSGKE) and 433-442 (ADGGTLFLDE). Residues 586–606 (GPAPSAALPQPGPAQSPAAAP) show a composition bias toward low complexity. The tract at residues 586 to 611 (GPAPSAALPQPGPAQSPAAAPFDPHQ) is disordered. Residues 630 to 649 (LSAVARQIGVSRMTLYRRME) constitute a DNA-binding region (H-T-H motif).

Required for sigma-54-dependent transcription of acoXABC. This chain is Acetoin catabolism regulatory protein (acoR), found in Cupriavidus necator (strain ATCC 17699 / DSM 428 / KCTC 22496 / NCIMB 10442 / H16 / Stanier 337) (Ralstonia eutropha).